The following is a 352-amino-acid chain: Isopentenyl-diphosphate delta-isomerase (352 aa).

6 to 7 contacts substrate; sequence RK. FMN contacts are provided by residues 63–65, Ser93, and Asn122; that span reads AMT. 93–95 is a binding site for substrate; sequence SQR. Gln160 serves as a coordination point for substrate. A Mg(2+)-binding site is contributed by Glu161. Residues Lys192, Thr221, 271-273, and 292-293 contribute to the FMN site; these read GIR and SQ.

The protein belongs to the IPP isomerase type 2 family. Homooctamer. Dimer of tetramers. It depends on FMN as a cofactor. The cofactor is NADPH. Requires Mg(2+) as cofactor.

The protein localises to the cytoplasm. It catalyses the reaction isopentenyl diphosphate = dimethylallyl diphosphate. In terms of biological role, involved in the biosynthesis of isoprenoids. Catalyzes the 1,3-allylic rearrangement of the homoallylic substrate isopentenyl (IPP) to its allylic isomer, dimethylallyl diphosphate (DMAPP). The polypeptide is Isopentenyl-diphosphate delta-isomerase (Pyrobaculum aerophilum (strain ATCC 51768 / DSM 7523 / JCM 9630 / CIP 104966 / NBRC 100827 / IM2)).